The sequence spans 96 residues: Dynein light chain roadblock-type 1 (96 aa).

Residue alanine 2 is modified to N-acetylalanine.

It belongs to the GAMAD family. Homodimer. The cytoplasmic dynein 1 complex consists of two catalytic heavy chains (HCs) and a number of non-catalytic subunits presented by intermediate chains (ICs), light intermediate chains (LICs) and light chains (LCs); the composition seems to vary in respect to the IC, LIC and LC composition. The heavy chain homodimer serves as a scaffold for the probable homodimeric assembly of the respective non-catalytic subunits. The ICs and LICs bind directly to the HC dimer and the LCs assemble on the IC dimer. Interacts with DYNLRB2. Interacts with DYNC1I1 and DYNC1I2. Interacts with RAB6A isoform 1 (GTP-bound); the interaction is direct. Interacts with RAB6A isoform 2 (GDP-bound); the interaction is direct. Interacts with RAB6B (GDP-bound).

The protein localises to the cytoplasm. It is found in the cytoskeleton. Its function is as follows. Acts as one of several non-catalytic accessory components of the cytoplasmic dynein 1 complex that are thought to be involved in linking dynein to cargos and to adapter proteins that regulate dynein function. Cytoplasmic dynein 1 acts as a motor for the intracellular retrograde motility of vesicles and organelles along microtubules. The polypeptide is Dynein light chain roadblock-type 1 (Dynlrb1) (Mus musculus (Mouse)).